A 256-amino-acid polypeptide reads, in one-letter code: Glucanase inhibitor protein 2 (256 aa).

The signal sequence occupies residues 1 to 15 (MKLISTIAAATTAFG). In terms of domain architecture, Peptidase S1 spans 27–254 (IFGGGIIPSG…ATEWINSVTK (228 aa)). A disulfide bridge links Cys54 with Cys70. Asn87, Asn102, Asn107, and Asn157 each carry an N-linked (GlcNAc...) asparagine glycan. 2 disulfides stabilise this stretch: Cys177–Cys189 and Cys199–Cys230.

This sequence belongs to the peptidase S1 family. Forms an apoplastic complex with host endoglucanases in tomato leaves during P.infestans infection.

Its subcellular location is the secreted. Secreted effector that suppresses host plant glucan elicitor-mediated defense responses. Targets host endoglucanases and inhibits the endoglucanase-mediated release of elicitor-active glucan oligosaccharides from P.infestans cell walls. This is Glucanase inhibitor protein 2 from Phytophthora infestans (Potato late blight agent).